The chain runs to 94 residues: Protein translocase subunit SecE (94 aa).

The disordered stretch occupies residues 1–32 (MTDAVGSIDMPDAQDEAPDSKKSRKGGKRGKK). Residues 22–32 (KSRKGGKRGKK) are compositionally biased toward basic residues. Residues 65 to 85 (TVVIIFVVIMIGLVTLIDYGF) traverse the membrane as a helical segment.

The protein belongs to the SecE/SEC61-gamma family. Component of the Sec protein translocase complex. Heterotrimer consisting of SecY, SecE and SecG subunits. The heterotrimers can form oligomers, although 1 heterotrimer is thought to be able to translocate proteins. Interacts with the ribosome. Interacts with SecDF, and other proteins may be involved. Interacts with SecA.

The protein localises to the cell membrane. Its function is as follows. Essential subunit of the Sec protein translocation channel SecYEG. Clamps together the 2 halves of SecY. May contact the channel plug during translocation. This chain is Protein translocase subunit SecE, found in Streptomyces coelicolor (strain ATCC BAA-471 / A3(2) / M145).